The following is a 331-amino-acid chain: Ferrochelatase (331 aa).

Fe cation contacts are provided by His-187 and Glu-286.

It belongs to the ferrochelatase family.

It localises to the cytoplasm. The enzyme catalyses heme b + 2 H(+) = protoporphyrin IX + Fe(2+). The protein operates within porphyrin-containing compound metabolism; protoheme biosynthesis; protoheme from protoporphyrin-IX: step 1/1. Its function is as follows. Catalyzes the ferrous insertion into protoporphyrin IX. The sequence is that of Ferrochelatase from Legionella pneumophila (strain Lens).